Here is a 432-residue protein sequence, read N- to C-terminus: Glutamate--tRNA ligase 2 (432 aa).

The short motif at P6–N16 is the 'HIGH' region element. The 'KMSKS' region signature appears at K235–R239. Position 238 (K238) interacts with ATP.

The protein belongs to the class-I aminoacyl-tRNA synthetase family. Glutamate--tRNA ligase type 1 subfamily. As to quaternary structure, monomer.

The protein resides in the cytoplasm. The catalysed reaction is tRNA(Glu) + L-glutamate + ATP = L-glutamyl-tRNA(Glu) + AMP + diphosphate. In terms of biological role, catalyzes the attachment of glutamate to tRNA(Glu) in a two-step reaction: glutamate is first activated by ATP to form Glu-AMP and then transferred to the acceptor end of tRNA(Glu). This Sulfurimonas denitrificans (strain ATCC 33889 / DSM 1251) (Thiomicrospira denitrificans (strain ATCC 33889 / DSM 1251)) protein is Glutamate--tRNA ligase 2.